The primary structure comprises 271 residues: uncharacterized protein (271 aa).

The interval 1–20 (MPDLHTLPAGSRPERAIRNN) is disordered.

This sequence belongs to the PEP2 family.

This is an uncharacterized protein from Aspergillus terreus (strain NIH 2624 / FGSC A1156).